A 155-amino-acid chain; its full sequence is Small ribosomal subunit protein uS7cz/uS7cy (155 aa).

It belongs to the universal ribosomal protein uS7 family. As to quaternary structure, part of the 30S ribosomal subunit.

It localises to the plastid. Its subcellular location is the chloroplast. One of the primary rRNA binding proteins, it binds directly to 16S rRNA where it nucleates assembly of the head domain of the 30S subunit. This Coffea arabica (Arabian coffee) protein is Small ribosomal subunit protein uS7cz/uS7cy (rps7-A).